The chain runs to 393 residues: Chorismate synthase (393 aa).

Residues Arg-40 and Arg-46 each coordinate NADP(+). Residues Arg-129–Ser-131, Gln-251–Ala-252, Gly-301, Lys-316–Thr-320, and Arg-342 contribute to the FMN site.

It belongs to the chorismate synthase family. Homotetramer. The cofactor is FMNH2.

It carries out the reaction 5-O-(1-carboxyvinyl)-3-phosphoshikimate = chorismate + phosphate. It participates in metabolic intermediate biosynthesis; chorismate biosynthesis; chorismate from D-erythrose 4-phosphate and phosphoenolpyruvate: step 7/7. In terms of biological role, catalyzes the anti-1,4-elimination of the C-3 phosphate and the C-6 proR hydrogen from 5-enolpyruvylshikimate-3-phosphate (EPSP) to yield chorismate, which is the branch point compound that serves as the starting substrate for the three terminal pathways of aromatic amino acid biosynthesis. This reaction introduces a second double bond into the aromatic ring system. This is Chorismate synthase from Koribacter versatilis (strain Ellin345).